Consider the following 349-residue polypeptide: Quinone oxidoreductase-like protein 1 (349 aa).

Belongs to the zinc-containing alcohol dehydrogenase family. Quinone oxidoreductase subfamily. In terms of assembly, homodimer. Component of the FERRY complex composed of five subunits, TBCK, PPP1R21, FERRY3, CRYZL1 and GATD1 with a ratio of 1:2:1:2:4, respectively. In terms of tissue distribution, ubiquitous.

The protein localises to the early endosome. Functionally, component of the FERRY complex (Five-subunit Endosomal Rab5 and RNA/ribosome intermediary). The FERRY complex directly interacts with mRNAs and RAB5A, and functions as a RAB5A effector involved in the localization and the distribution of specific mRNAs most likely by mediating their endosomal transport. The complex recruits mRNAs and ribosomes to early endosomes through direct mRNA-interaction. The sequence is that of Quinone oxidoreductase-like protein 1 (CRYZL1) from Homo sapiens (Human).